We begin with the raw amino-acid sequence, 208 residues long: Probable Brix domain-containing ribosomal biogenesis protein (208 aa).

The 196-residue stretch at methionine 1–tryptophan 196 folds into the Brix domain.

Functionally, probably involved in the biogenesis of the ribosome. The sequence is that of Probable Brix domain-containing ribosomal biogenesis protein from Thermococcus kodakarensis (strain ATCC BAA-918 / JCM 12380 / KOD1) (Pyrococcus kodakaraensis (strain KOD1)).